The following is a 449-amino-acid chain: Glutamyl-tRNA reductase (449 aa).

Substrate is bound by residues 49–52 (TCNR), Ser-107, 112–114 (EPQ), and Gln-118. Cys-50 serves as the catalytic Nucleophile. Residue 187–192 (GAGETI) participates in NADP(+) binding. Residues 418–449 (QLVERSSEGDDSQQAGADGGAARGDRRAAGGS) form a disordered region. The segment covering 440 to 449 (RGDRRAAGGS) has biased composition (basic and acidic residues).

This sequence belongs to the glutamyl-tRNA reductase family. In terms of assembly, homodimer.

The catalysed reaction is (S)-4-amino-5-oxopentanoate + tRNA(Glu) + NADP(+) = L-glutamyl-tRNA(Glu) + NADPH + H(+). It participates in porphyrin-containing compound metabolism; protoporphyrin-IX biosynthesis; 5-aminolevulinate from L-glutamyl-tRNA(Glu): step 1/2. Catalyzes the NADPH-dependent reduction of glutamyl-tRNA(Glu) to glutamate 1-semialdehyde (GSA). This chain is Glutamyl-tRNA reductase, found in Halorhodospira halophila (strain DSM 244 / SL1) (Ectothiorhodospira halophila (strain DSM 244 / SL1)).